Here is a 293-residue protein sequence, read N- to C-terminus: 4-diphosphocytidyl-2-C-methyl-D-erythritol kinase (293 aa).

K10 is a catalytic residue. 96–106 (PVASGIGGGSS) provides a ligand contact to ATP. D138 is a catalytic residue.

The protein belongs to the GHMP kinase family. IspE subfamily.

It catalyses the reaction 4-CDP-2-C-methyl-D-erythritol + ATP = 4-CDP-2-C-methyl-D-erythritol 2-phosphate + ADP + H(+). It participates in isoprenoid biosynthesis; isopentenyl diphosphate biosynthesis via DXP pathway; isopentenyl diphosphate from 1-deoxy-D-xylulose 5-phosphate: step 3/6. Its function is as follows. Catalyzes the phosphorylation of the position 2 hydroxy group of 4-diphosphocytidyl-2C-methyl-D-erythritol. The protein is 4-diphosphocytidyl-2-C-methyl-D-erythritol kinase of Chelativorans sp. (strain BNC1).